The sequence spans 244 residues: uncharacterized protein (244 aa).

Basic residues predominate over residues methionine 1–serine 11. Disordered stretches follow at residues methionine 1–glutamate 104 and alanine 213–lysine 244. Residues proline 12–arginine 31 show a composition bias toward basic and acidic residues. A compositionally biased stretch (basic residues) spans lysine 32–serine 46. The span at phenylalanine 63 to serine 75 shows a compositional bias: basic and acidic residues. Positions lysine 77–proline 89 are enriched in pro residues. The segment covering alanine 213–glutamate 223 has biased composition (basic and acidic residues). Positions glutamine 224–serine 234 are enriched in polar residues.

This is an uncharacterized protein from Caenorhabditis elegans.